The primary structure comprises 207 residues: Large ribosomal subunit protein uL4 (207 aa).

Residues histidine 49–isoleucine 78 form a disordered region. Positions glycine 60–glycine 71 are enriched in basic residues.

This sequence belongs to the universal ribosomal protein uL4 family. As to quaternary structure, part of the 50S ribosomal subunit.

One of the primary rRNA binding proteins, this protein initially binds near the 5'-end of the 23S rRNA. It is important during the early stages of 50S assembly. It makes multiple contacts with different domains of the 23S rRNA in the assembled 50S subunit and ribosome. Functionally, forms part of the polypeptide exit tunnel. In Enterococcus faecalis (strain ATCC 700802 / V583), this protein is Large ribosomal subunit protein uL4.